The chain runs to 135 residues: ATP synthase epsilon chain, chloroplastic (135 aa).

The protein belongs to the ATPase epsilon chain family. F-type ATPases have 2 components, CF(1) - the catalytic core - and CF(0) - the membrane proton channel. CF(1) has five subunits: alpha(3), beta(3), gamma(1), delta(1), epsilon(1). CF(0) has three main subunits: a, b and c.

The protein localises to the plastid. Its subcellular location is the chloroplast thylakoid membrane. Produces ATP from ADP in the presence of a proton gradient across the membrane. In Euglena gracilis, this protein is ATP synthase epsilon chain, chloroplastic.